The primary structure comprises 634 residues: MSVETQKETLGFQTEVKQLLHLMIHSLYSNKEIFLRELISNASDAADKLRFEALANPELLEGGAELKIRVSFDKEANTVTLEDNGIGMSREDVVTHLGTIAKSGTADFLKNLSGDQKKDSHLIGQFGVGFYSAFIVADKVDVYSRRAGQPASEGVHWSSKGEGEFDVATIDKPERGTRIVLHLKKGEEEFADGWRLRNVIKKYSDHIALPIELPKEFHGEEADKPAEPEWETVNRASALWTRPRAEVKDEEYQEFYKHVAHDFENPLSWSHNKVEGKLEYTSLLYVPGRAPFDLYHREAPRGLKLYVQRVFIMDQADEFLPLYLRFIKGVVDSNDLSLNVSREILQKDPVIDSMKSALTKRVLDMLEKLAKNEPEQYKTFWKNFGQVLKEGPAEDFGNKEKIAGLLRFASTGDDSGEQSVALADYIGRMKEGQDKIYYLTGESYSQVKNSPHLEVFRKKGIEVLLLTDRIDEWLMSYLPEFDGKQFVDVARGDLDLGSLDSEEDKKAQEEVAKSKEGLIERLKKVLDEQVSEVRVSHRLTDSPAILAIGEQDLGLQMRQILEASGQKVPDSKPIFEINPQHPLIEKLDAEPDEDRFGELSHILFDQAALAAGDSLKDPGAYVRRLNKLLVELSA.

The a; substrate-binding stretch occupies residues 1–342 (MSVETQKETL…SNDLSLNVSR (342 aa)). The b stretch occupies residues 343-559 (EILQKDPVID…EQDLGLQMRQ (217 aa)). The tract at residues 560-634 (ILEASGQKVP…LNKLLVELSA (75 aa)) is c.

This sequence belongs to the heat shock protein 90 family. In terms of assembly, homodimer.

The protein localises to the cytoplasm. Its function is as follows. Molecular chaperone. Has ATPase activity. The sequence is that of Chaperone protein HtpG from Pseudomonas aeruginosa (strain ATCC 15692 / DSM 22644 / CIP 104116 / JCM 14847 / LMG 12228 / 1C / PRS 101 / PAO1).